Reading from the N-terminus, the 75-residue chain is MAPEVLPKPQMRGLLARRLRFHMVTGFVLSLGVAALYKVGVADKRKKAYADFYRNYDAMKDFEEMRKAGIFQSVK.

Over 1 to 13 (MAPEVLPKPQMRG) the chain is Mitochondrial matrix. A helical membrane pass occupies residues 14-54 (LLARRLRFHMVTGFVLSLGVAALYKVGVADKRKKAYADFYR). The Mitochondrial intermembrane segment spans residues 55 to 75 (NYDAMKDFEEMRKAGIFQSVK).

This sequence belongs to the cytochrome c oxidase subunit 6c family. In terms of assembly, component of the cytochrome c oxidase (complex IV, CIV), a multisubunit enzyme composed of 14 subunits. The complex is composed of a catalytic core of 3 subunits MT-CO1, MT-CO2 and MT-CO3, encoded in the mitochondrial DNA, and 11 supernumerary subunits COX4I, COX5A, COX5B, COX6A, COX6B, COX6C, COX7A, COX7B, COX7C, COX8 and NDUFA4, which are encoded in the nuclear genome. The complex exists as a monomer or a dimer and forms supercomplexes (SCs) in the inner mitochondrial membrane with NADH-ubiquinone oxidoreductase (complex I, CI) and ubiquinol-cytochrome c oxidoreductase (cytochrome b-c1 complex, complex III, CIII), resulting in different assemblies (supercomplex SCI(1)III(2)IV(1) and megacomplex MCI(2)III(2)IV(2)).

Its subcellular location is the mitochondrion inner membrane. It participates in energy metabolism; oxidative phosphorylation. Component of the cytochrome c oxidase, the last enzyme in the mitochondrial electron transport chain which drives oxidative phosphorylation. The respiratory chain contains 3 multisubunit complexes succinate dehydrogenase (complex II, CII), ubiquinol-cytochrome c oxidoreductase (cytochrome b-c1 complex, complex III, CIII) and cytochrome c oxidase (complex IV, CIV), that cooperate to transfer electrons derived from NADH and succinate to molecular oxygen, creating an electrochemical gradient over the inner membrane that drives transmembrane transport and the ATP synthase. Cytochrome c oxidase is the component of the respiratory chain that catalyzes the reduction of oxygen to water. Electrons originating from reduced cytochrome c in the intermembrane space (IMS) are transferred via the dinuclear copper A center (CU(A)) of subunit 2 and heme A of subunit 1 to the active site in subunit 1, a binuclear center (BNC) formed by heme A3 and copper B (CU(B)). The BNC reduces molecular oxygen to 2 water molecules using 4 electrons from cytochrome c in the IMS and 4 protons from the mitochondrial matrix. This is Cytochrome c oxidase subunit 6C (COX6C) from Macaca silenus (Lion-tailed macaque).